Consider the following 558-residue polypeptide: Protein NRT1/ PTR FAMILY 2.7 (558 aa).

Helical transmembrane passes span 31–51, 63–83, 90–110, 140–162, 178–198, 204–224, 319–339, 357–377, 399–419, 440–460, 479–499, and 518–538; these read FMIATLLGLTIAAWGWLLNLI, IAAAQIANIVSGCICMVPAVA, FFGTIPVISVSAFISLMGVAL, LGVLYTAITLASIGTGGTRFTLA, FFNWFFFTTYLAGAISATAIV, ISWTLGFGLSVAANFFSFLVF, IIPLALATIFLSTPIAMQLSL, IPAGSLQVITLLSTCLFIIVN, VGIGHAFNILSMAVTAIVEAK, VLWLFPPLVIVGIGEAFHFPG, SITSVVIGICFYTSTALIDLI, and VYWILVIGGVLNLGYFLVCSW.

It belongs to the major facilitator superfamily. Proton-dependent oligopeptide transporter (POT/PTR) (TC 2.A.17) family. As to expression, expressed in shoots and in the cortex of mature roots. Not expressed in root tip meristematic cells.

It is found in the cell membrane. Its function is as follows. Transporter involved in a passive nitrate efflux. Not competent for chloride transport. The sequence is that of Protein NRT1/ PTR FAMILY 2.7 (NPF2.7) from Arabidopsis thaliana (Mouse-ear cress).